Here is a 519-residue protein sequence, read N- to C-terminus: Apolipoprotein N-acyltransferase (519 aa).

The next 6 membrane-spanning stretches (helical) occupy residues 6 to 26 (APLG…IWIF), 47 to 67 (LTAI…ITGV), 83 to 103 (IAAF…FVWL), 126 to 146 (LFIL…SHSI), 174 to 194 (LLSA…IDFL), and 206 to 226 (WHYF…GWLL). A CN hydrolase domain is found at 244–482 (IQGNIPNQIK…YEIHAAPIYR (239 aa)). E285 functions as the Proton acceptor in the catalytic mechanism. K343 is an active-site residue. The active-site Nucleophile is the C394. Residues 496 to 516 (VVFLLLVVSAIAWLYQIVFPL) form a helical membrane-spanning segment.

It belongs to the CN hydrolase family. Apolipoprotein N-acyltransferase subfamily.

Its subcellular location is the cell inner membrane. It carries out the reaction N-terminal S-1,2-diacyl-sn-glyceryl-L-cysteinyl-[lipoprotein] + a glycerophospholipid = N-acyl-S-1,2-diacyl-sn-glyceryl-L-cysteinyl-[lipoprotein] + a 2-acyl-sn-glycero-3-phospholipid + H(+). It functions in the pathway protein modification; lipoprotein biosynthesis (N-acyl transfer). Its function is as follows. Catalyzes the phospholipid dependent N-acylation of the N-terminal cysteine of apolipoprotein, the last step in lipoprotein maturation. In Synechocystis sp. (strain ATCC 27184 / PCC 6803 / Kazusa), this protein is Apolipoprotein N-acyltransferase.